A 383-amino-acid polypeptide reads, in one-letter code: MCWISMSQSRFIIKSLFSTAGGFLLGSALSNPPSLATAFSSSSSSSSAAAAVDMETHKTKVCIVGSGPAAHTAAIYASRAELKPLLFEGWMANDIAPGGQLTTTTDVENFPGFPEGILGIDIVEKFRKQSERFGTTIFTETVNKVDFSSKPFKLFTDSRTVLADSVIISTGAVAKRLSFTGSGEGNGGFWNRGISACAVCDGAAPIFRNKPLVVIGGGDSAMEEANFLTKYGSKVYIIHRRDTFRASKIMQQRALSNPKIEVIWNSAVVEAYGDENGRVLGGLKVKNVVTGDVSDLKVSGLFFAIGHEPATKFLDGQLELDEDGYVVTKPGTTKTSVVGVFAAGDVQDKKYRQAITAAGTGCMAALDAEHYLQEIGSQEGKSD.

Residues Ser66 to Ala69, Phe87 to Glu88, Ile95 to Gln100, Asn109, Val142, Cys200, Asp345, and Arg352 to Ala354 contribute to the FAD site. Cys197 and Cys200 are oxidised to a cystine.

The protein belongs to the class-II pyridine nucleotide-disulfide oxidoreductase family. Homodimer. FAD is required as a cofactor.

It is found in the cytoplasm. The protein resides in the mitochondrion matrix. The catalysed reaction is [thioredoxin]-dithiol + NADP(+) = [thioredoxin]-disulfide + NADPH + H(+). In terms of biological role, possesses thioredoxin-disulfide reductase activity towards thioredoxins O1, O2 and F3. This is Thioredoxin reductase 2 (NTR2) from Arabidopsis thaliana (Mouse-ear cress).